The sequence spans 501 residues: Glycerol kinase (501 aa).

Residue threonine 11 participates in ADP binding. ATP-binding residues include threonine 11, threonine 12, and serine 13. Threonine 11 contacts sn-glycerol 3-phosphate. Arginine 15 provides a ligand contact to ADP. Sn-glycerol 3-phosphate is bound by residues arginine 81, glutamate 82, tyrosine 133, and aspartate 242. Glycerol is bound by residues arginine 81, glutamate 82, tyrosine 133, aspartate 242, and glutamine 243. 2 residues coordinate ADP: threonine 264 and glycine 307. 4 residues coordinate ATP: threonine 264, glycine 307, glutamine 311, and glycine 409. ADP is bound by residues glycine 409 and asparagine 413.

Belongs to the FGGY kinase family.

The enzyme catalyses glycerol + ATP = sn-glycerol 3-phosphate + ADP + H(+). Its pathway is polyol metabolism; glycerol degradation via glycerol kinase pathway; sn-glycerol 3-phosphate from glycerol: step 1/1. Inhibited by fructose 1,6-bisphosphate (FBP). In terms of biological role, key enzyme in the regulation of glycerol uptake and metabolism. Catalyzes the phosphorylation of glycerol to yield sn-glycerol 3-phosphate. The polypeptide is Glycerol kinase (Borrelia garinii subsp. bavariensis (strain ATCC BAA-2496 / DSM 23469 / PBi) (Borreliella bavariensis)).